We begin with the raw amino-acid sequence, 279 residues long: Pantothenate synthetase (279 aa).

Residue 26–33 (MGNLHEGH) participates in ATP binding. The active-site Proton donor is the His-33. Gln-57 is a binding site for (R)-pantoate. Gln-57 serves as a coordination point for beta-alanine. 144-147 (GKKD) contributes to the ATP binding site. Gln-150 contributes to the (R)-pantoate binding site. Residues Val-173 and 181 to 184 (LSSR) contribute to the ATP site.

The protein belongs to the pantothenate synthetase family. Homodimer.

Its subcellular location is the cytoplasm. The catalysed reaction is (R)-pantoate + beta-alanine + ATP = (R)-pantothenate + AMP + diphosphate + H(+). It functions in the pathway cofactor biosynthesis; (R)-pantothenate biosynthesis; (R)-pantothenate from (R)-pantoate and beta-alanine: step 1/1. Catalyzes the condensation of pantoate with beta-alanine in an ATP-dependent reaction via a pantoyl-adenylate intermediate. In Burkholderia cenocepacia (strain ATCC BAA-245 / DSM 16553 / LMG 16656 / NCTC 13227 / J2315 / CF5610) (Burkholderia cepacia (strain J2315)), this protein is Pantothenate synthetase.